A 227-amino-acid chain; its full sequence is Orotidine 5'-phosphate decarboxylase (227 aa).

Substrate-binding positions include Asp-8, Lys-30, 57-66 (DLKFHDIPNT), Thr-116, Arg-177, Gln-186, Gly-206, and Arg-207. Lys-59 acts as the Proton donor in catalysis.

It belongs to the OMP decarboxylase family. Type 1 subfamily. As to quaternary structure, homodimer.

The enzyme catalyses orotidine 5'-phosphate + H(+) = UMP + CO2. It functions in the pathway pyrimidine metabolism; UMP biosynthesis via de novo pathway; UMP from orotate: step 2/2. Catalyzes the decarboxylation of orotidine 5'-monophosphate (OMP) to uridine 5'-monophosphate (UMP). The sequence is that of Orotidine 5'-phosphate decarboxylase from Acinetobacter baumannii (strain AB307-0294).